A 295-amino-acid chain; its full sequence is Pyridoxal 5'-phosphate synthase subunit PdxS (295 aa).

D25 is a D-ribose 5-phosphate binding site. K82 (schiff-base intermediate with D-ribose 5-phosphate) is an active-site residue. G154 contacts D-ribose 5-phosphate. R166 contacts D-glyceraldehyde 3-phosphate. Residues G215 and 236–237 (GS) contribute to the D-ribose 5-phosphate site.

Belongs to the PdxS/SNZ family. As to quaternary structure, in the presence of PdxT, forms a dodecamer of heterodimers.

It carries out the reaction aldehydo-D-ribose 5-phosphate + D-glyceraldehyde 3-phosphate + L-glutamine = pyridoxal 5'-phosphate + L-glutamate + phosphate + 3 H2O + H(+). Its pathway is cofactor biosynthesis; pyridoxal 5'-phosphate biosynthesis. In terms of biological role, catalyzes the formation of pyridoxal 5'-phosphate from ribose 5-phosphate (RBP), glyceraldehyde 3-phosphate (G3P) and ammonia. The ammonia is provided by the PdxT subunit. Can also use ribulose 5-phosphate and dihydroxyacetone phosphate as substrates, resulting from enzyme-catalyzed isomerization of RBP and G3P, respectively. This Oceanobacillus iheyensis (strain DSM 14371 / CIP 107618 / JCM 11309 / KCTC 3954 / HTE831) protein is Pyridoxal 5'-phosphate synthase subunit PdxS.